Reading from the N-terminus, the 44-residue chain is Photosystem I reaction center subunit IX (44 aa).

A helical membrane pass occupies residues 7–27; that stretch reads YLSVAPVLSTLSLGFFAGFLI.

This sequence belongs to the PsaJ family.

The protein resides in the plastid membrane. In terms of biological role, may help in the organization of the PsaE and PsaF subunits. This is Photosystem I reaction center subunit IX from Cuscuta obtusiflora (Peruvian dodder).